A 193-amino-acid polypeptide reads, in one-letter code: Phosphatidylglycerophosphatase and protein-tyrosine phosphatase 1 (193 aa).

The N-terminal 31 residues, Met-1–Gly-31, are a transit peptide targeting the mitochondrion. Residues Trp-37–Ala-188 form the Tyrosine-protein phosphatase domain. At Lys-85 the chain carries N6-succinyllysine. The Phosphocysteine intermediate role is filled by Cys-132.

It belongs to the protein-tyrosine phosphatase family. Non-receptor class dual specificity subfamily. As to quaternary structure, interacts with STYXL1; the interaction inhibits PTPMT1 catalytic activity. As to expression, expressed in liver and in pancreatic beta cells.

It is found in the mitochondrion inner membrane. It carries out the reaction O-phospho-L-tyrosyl-[protein] + H2O = L-tyrosyl-[protein] + phosphate. The catalysed reaction is O-phospho-L-seryl-[protein] + H2O = L-seryl-[protein] + phosphate. The enzyme catalyses O-phospho-L-threonyl-[protein] + H2O = L-threonyl-[protein] + phosphate. It catalyses the reaction a 1,2-diacyl-sn-glycero-3-phospho-(1'-sn-glycero-3'-phosphate) + H2O = a 1,2-diacyl-sn-glycero-3-phospho-(1'-sn-glycerol) + phosphate. It carries out the reaction 1,2-di-(9Z-octadecenoyl)-sn-glycero-3-phospho-(1'-sn-glycerol-3'-phosphate) + H2O = 1,2-di-(9Z-octadecenoyl)-sn-glycero-3-phospho-(1'-sn-glycerol) + phosphate. The catalysed reaction is 1,2-dioctanoyl-sn-glycero-3-phospho-(1D-myo-inositol-5-phosphate) + H2O = 1,2-dioctanoyl-sn-glycero-3-phospho-(1D-myo-inositol) + phosphate. The enzyme catalyses a 1-acyl-2-hexanoyl-sn-glycero-3-phospho-(1D-myo-inositol-5-phosphate) + H2O = a 1-acyl-2-hexanoyl-sn-glycero-3-phospho-(1D-myo-inositol) + phosphate. It catalyses the reaction 1,2-dibutyryl-sn-glycero-3-phospho-(1D-myo-inositol-5-phosphate) + H2O = 1,2-dibutyryl-sn-glycero-3-phospho-(1D-myo-inositol) + phosphate. It functions in the pathway phospholipid metabolism; phosphatidylglycerol biosynthesis; phosphatidylglycerol from CDP-diacylglycerol: step 2/2. Its function is as follows. Lipid phosphatase which dephosphorylates phosphatidylglycerophosphate (PGP) to phosphatidylglycerol (PG). PGP is an essential intermediate in the biosynthetic pathway of cardiolipin, a mitochondrial-specific phospholipid regulating the membrane integrity and activities of the organelle. Has also been shown to display phosphatase activity toward phosphoprotein substrates, specifically mediates dephosphorylation of mitochondrial proteins, thereby playing an essential role in ATP production. Has probably a preference for proteins phosphorylated on Ser and/or Thr residues compared to proteins phosphorylated on Tyr residues. Probably involved in regulation of insulin secretion in pancreatic beta cells. May prevent intrinsic apoptosis, probably by regulating mitochondrial membrane integrity. The sequence is that of Phosphatidylglycerophosphatase and protein-tyrosine phosphatase 1 from Rattus norvegicus (Rat).